A 451-amino-acid polypeptide reads, in one-letter code: Epi-neemfruitin B 7-O-acetyltransferse L7AT (451 aa).

Catalysis depends on proton acceptor residues His-165 and Asp-384.

This sequence belongs to the plant acyltransferase family. As to quaternary structure, monomer. In terms of tissue distribution, mainly expressed in petioles and, to a lower extent, in roots.

It catalyses the reaction epi-neemfruitin B + acetyl-CoA = 7-acetyl-epi-neemfruitin B + CoA. Its pathway is secondary metabolite biosynthesis; terpenoid biosynthesis. In terms of biological role, acetyltransferase involved in the biosynthesis of limonoids triterpene natural products such as azadirachtin, an antifeedant widely used as bioinsecticide, and possessing many medicinal applications including anti-tumoral, anti-malarial, anti-rheumatic, antibacterial, anti-inflammatory, anti-pyretic and diuretic effects. Catalyzes the formation of 7-acetyl-epi-neemfruitin B from epi-neemfruitin B. In Melia azedarach (Chinaberry tree), this protein is Epi-neemfruitin B 7-O-acetyltransferse L7AT.